The chain runs to 182 residues: Protein SYM1 (182 aa).

3 consecutive transmembrane segments (helical) span residues 51-70 (TLRP…DKWY), 98-118 (LIFA…MEGG), and 135-155 (LLAN…LVPV).

This sequence belongs to the peroxisomal membrane protein PXMP2/4 family.

The protein resides in the mitochondrion inner membrane. Functionally, may be involved in cellular response to stress. Required to maintain mitochondrial DNA (mtDNA) integrity and stability. This chain is Protein SYM1 (SYM1), found in Eremothecium gossypii (strain ATCC 10895 / CBS 109.51 / FGSC 9923 / NRRL Y-1056) (Yeast).